The sequence spans 80 residues: Exodeoxyribonuclease 7 small subunit (80 aa).

The protein belongs to the XseB family. As to quaternary structure, heterooligomer composed of large and small subunits.

It is found in the cytoplasm. The catalysed reaction is Exonucleolytic cleavage in either 5'- to 3'- or 3'- to 5'-direction to yield nucleoside 5'-phosphates.. Its function is as follows. Bidirectionally degrades single-stranded DNA into large acid-insoluble oligonucleotides, which are then degraded further into small acid-soluble oligonucleotides. The polypeptide is Exodeoxyribonuclease 7 small subunit (Shigella sonnei (strain Ss046)).